The following is a 339-amino-acid chain: Anthranilate phosphoribosyltransferase (339 aa).

5-phospho-alpha-D-ribose 1-diphosphate contacts are provided by residues glycine 80, 83-84 (GD), threonine 88, 90-93 (NIST), 108-116 (KHGNRSVSS), and serine 120. Glycine 80 provides a ligand contact to anthranilate. Serine 92 is a binding site for Mg(2+). Position 111 (asparagine 111) interacts with anthranilate. Residue arginine 166 coordinates anthranilate. Aspartate 225 and glutamate 226 together coordinate Mg(2+).

Belongs to the anthranilate phosphoribosyltransferase family. In terms of assembly, homodimer. The cofactor is Mg(2+).

It catalyses the reaction N-(5-phospho-beta-D-ribosyl)anthranilate + diphosphate = 5-phospho-alpha-D-ribose 1-diphosphate + anthranilate. Its pathway is amino-acid biosynthesis; L-tryptophan biosynthesis; L-tryptophan from chorismate: step 2/5. In terms of biological role, catalyzes the transfer of the phosphoribosyl group of 5-phosphorylribose-1-pyrophosphate (PRPP) to anthranilate to yield N-(5'-phosphoribosyl)-anthranilate (PRA). In Alkaliphilus metalliredigens (strain QYMF), this protein is Anthranilate phosphoribosyltransferase.